The chain runs to 769 residues: DNA helicase/primase complex-associated protein (769 aa).

The protein belongs to the herpesviridae HEPA family. As to quaternary structure, associates with the primase and the helicase to form the helicase-primase complex. Interacts with the origin-binding protein. Interacts with the polymerase catalytic subunit.

The protein localises to the host nucleus. In terms of biological role, component of the helicase/primase complex. Unwinds the DNA at the replication forks and generates single-stranded DNA for both leading and lagging strand synthesis. The primase synthesizes short RNA primers on the lagging strand that the polymerase presumably elongates using dNTPs. The primase-associated factor has no known catalytic activity in the complex and may serve to facilitate the formation of the replisome by directly interacting with the origin-binding protein and the polymerase. This is DNA helicase/primase complex-associated protein (MDV020) from Gallus gallus (Chicken).